The following is a 466-amino-acid chain: Ribosomal protein uS12 methylthiotransferase RimO (466 aa).

Residues P16–A127 form the MTTase N-terminal domain. Positions 25, 61, 90, 165, 169, and 172 each coordinate [4Fe-4S] cluster. A Radical SAM core domain is found at T151–E380. Residues Q383–G454 enclose the TRAM domain.

This sequence belongs to the methylthiotransferase family. RimO subfamily. [4Fe-4S] cluster serves as cofactor.

It localises to the cytoplasm. It catalyses the reaction L-aspartate(89)-[ribosomal protein uS12]-hydrogen + (sulfur carrier)-SH + AH2 + 2 S-adenosyl-L-methionine = 3-methylsulfanyl-L-aspartate(89)-[ribosomal protein uS12]-hydrogen + (sulfur carrier)-H + 5'-deoxyadenosine + L-methionine + A + S-adenosyl-L-homocysteine + 2 H(+). Catalyzes the methylthiolation of an aspartic acid residue of ribosomal protein uS12. This Synechococcus sp. (strain CC9902) protein is Ribosomal protein uS12 methylthiotransferase RimO.